A 221-amino-acid chain; its full sequence is MEMLRRSSVFAAEVMEVFDRSPTDKELVSQSKVLCRDYIHSRLHRAGIGWSKPEHGSGGTLAEVSSVLLWLGDELEYLRPNVYRNVARQLNITIASENIVSDAFLAVAAEIFSTEYSRKGLEKHKGVTWGKIVSLYAVAGALAVDCVRNGHPAMVHTIVDCMGEFVRKSLASWLKKRGGWADITKCVVSTDPSFHSHWLVTAACACGHYLKAVVFYLLREK.

The BH4 signature appears at 32 to 44; the sequence is KVLCRDYIHSRLH. The BH3 motif lies at 64-80; it reads VSSVLLWLGDELEYLRP. The BH1 motif lies at 110–140; that stretch reads EIFSTEYSRKGLEKHKGVTWGKIVSLYAVAG. The BH2 motif lies at 173 to 187; sequence WLKKRGGWADITKCV. A helical transmembrane segment spans residues 198–218; the sequence is WLVTAACACGHYLKAVVFYLL.

Belongs to the Bcl-2 family. In terms of tissue distribution, strongest expression in ovary and eye, weaker expression in gut, kidney and brain. Little expression in liver or heart.

The protein localises to the membrane. In terms of biological role, may play a role in apoptosis. Does not appear to show pro-apoptotic activity when expressed ectopically in early embryos. In Danio rerio (Zebrafish), this protein is Bcl-2-related ovarian killer protein homolog A.